The chain runs to 720 residues: MAPPRNVVKIAVQMSDAIPQLIQLDQAKPLATVLKEVCDTWSLTHPEHYALQFADGHRKYITENNRSEIKNGSILCLSTAPDLKAQQLLSRLQNASREGCCEVLRNLVPLASDMTFAQEVISRDGLQKLSTIIENGDDLGEMLALGLRAFLELMEHGVVSWETLSISFVRKVVSYVNMNLMDASVQPLALRLLESVTLSSPTLGQLVKSEVPLDRLLVHLQVMNQQLQTKAMALLTALLQGASPAERKDMLDCLWKKNLRQFIYKNIIHSAAPMGDEMAHHLYVLQALTLGLLEPRMRTPLDPYSQEQREQLQALRQAAFEPDGESLGTGLSADRRRSLCVREFRKLGFSNSSPAQDLERVPPGLLALDNMLYFSRHAPSAYSRFVLENSSREDKHECPFARSSIQLTVLLCELLHVGEPCSETAQDFSPMFFSQDHSFHELFCVAIQLLNKTWKEMRATQEDFDKVMQVVREQLARTLALKPTSLELFRTKVNALTYGEVLRLRQTERLHQEGTLAPPILELREKLKPELMGLIRQQRLLRLCEGMLFRKISSRRRQDKLWFCCLSPNHKVLQYGDVEEGANPPTLESLTEQLPVADIRALLMGKDCPHVREKGSGKQNKDLYELAFSISYDHGEEEAYLNFIAPSKRDFYLWTDGLSALLGSTMGSEQTRLDLEQLLTMETKLRLLELENVPIPEHPPPVPPPPTNFNFCYDYSMTEP.

In terms of domain architecture, ELMO spans 307 to 479 (EQREQLQALR…VVREQLARTL (173 aa)). Residues 541 to 663 (LRLCEGMLFR…WTDGLSALLG (123 aa)) enclose the PH domain.

As to quaternary structure, probably interacts directly with the SH3-domain of DOCK1 via its SH3-binding site. Part of a complex with DOCK1 and RAC1. Interacts with ADGRB3.

It is found in the cytoplasm. In terms of biological role, involved in cytoskeletal rearrangements required for phagocytosis of apoptotic cells and cell motility. Acts in association with DOCK1 and CRK. Was initially proposed to be required in complex with DOCK1 to activate Rac Rho small GTPases. May enhance the guanine nucleotide exchange factor (GEF) activity of DOCK1. In Rattus norvegicus (Rat), this protein is Engulfment and cell motility protein 3 (Elmo3).